The chain runs to 42 residues: Photosystem II reaction center protein J (42 aa).

The chain crosses the membrane as a helical span at residues 10–30 (IPLWLIATVAGILVLTVVGIF).

Belongs to the PsbJ family. As to quaternary structure, PSII is composed of 1 copy each of membrane proteins PsbA, PsbB, PsbC, PsbD, PsbE, PsbF, PsbH, PsbI, PsbJ, PsbK, PsbL, PsbM, PsbT, PsbX, PsbY, PsbZ, Psb30/Ycf12, at least 3 peripheral proteins of the oxygen-evolving complex and a large number of cofactors. It forms dimeric complexes.

Its subcellular location is the plastid. It is found in the chloroplast thylakoid membrane. Functionally, one of the components of the core complex of photosystem II (PSII). PSII is a light-driven water:plastoquinone oxidoreductase that uses light energy to abstract electrons from H(2)O, generating O(2) and a proton gradient subsequently used for ATP formation. It consists of a core antenna complex that captures photons, and an electron transfer chain that converts photonic excitation into a charge separation. This is Photosystem II reaction center protein J from Chara vulgaris (Common stonewort).